A 422-amino-acid polypeptide reads, in one-letter code: Tyrosine--tRNA ligase 1 (422 aa).

Y36 lines the L-tyrosine pocket. The 'HIGH' region signature appears at P41–H50. L-tyrosine contacts are provided by Y173 and Q177. Residues K233–T237 carry the 'KMSKS' region motif. K236 contacts ATP. Residues S355–L419 enclose the S4 RNA-binding domain.

The protein belongs to the class-I aminoacyl-tRNA synthetase family. TyrS type 1 subfamily. As to quaternary structure, homodimer.

The protein resides in the cytoplasm. It catalyses the reaction tRNA(Tyr) + L-tyrosine + ATP = L-tyrosyl-tRNA(Tyr) + AMP + diphosphate + H(+). Its function is as follows. Catalyzes the attachment of tyrosine to tRNA(Tyr) in a two-step reaction: tyrosine is first activated by ATP to form Tyr-AMP and then transferred to the acceptor end of tRNA(Tyr). The polypeptide is Tyrosine--tRNA ligase 1 (Vibrio vulnificus (strain YJ016)).